A 159-amino-acid polypeptide reads, in one-letter code: NAD(P)H-quinone oxidoreductase subunit J, chloroplastic (159 aa).

It belongs to the complex I 30 kDa subunit family. In terms of assembly, NDH is composed of at least 16 different subunits, 5 of which are encoded in the nucleus.

It localises to the plastid. It is found in the chloroplast thylakoid membrane. It catalyses the reaction a plastoquinone + NADH + (n+1) H(+)(in) = a plastoquinol + NAD(+) + n H(+)(out). It carries out the reaction a plastoquinone + NADPH + (n+1) H(+)(in) = a plastoquinol + NADP(+) + n H(+)(out). NDH shuttles electrons from NAD(P)H:plastoquinone, via FMN and iron-sulfur (Fe-S) centers, to quinones in the photosynthetic chain and possibly in a chloroplast respiratory chain. The immediate electron acceptor for the enzyme in this species is believed to be plastoquinone. Couples the redox reaction to proton translocation, and thus conserves the redox energy in a proton gradient. The polypeptide is NAD(P)H-quinone oxidoreductase subunit J, chloroplastic (Triticum aestivum (Wheat)).